A 793-amino-acid polypeptide reads, in one-letter code: Transcription factor castor (793 aa).

Positions 44-53 (NEDISSSTSV) are enriched in polar residues. Disordered regions lie at residues 44–101 (NEDI…NLIA), 199–259 (VTST…HTNA), and 272–296 (LEST…DSSY). Composition is skewed to low complexity over residues 54 to 68 (QQQQ…QQPQ), 81 to 98 (SSQN…PNSN), and 210 to 221 (ATPAPSAGATAG). A Phosphothreonine modification is found at T211. S215 is subject to Phosphoserine. A compositionally biased stretch (acidic residues) spans 233–242 (ESADDDEDDD). Over residues 245 to 254 (LSSLTSCSSS) the composition is skewed to low complexity. The span at 273 to 284 (ESTTDSLDSPSM) shows a compositional bias: polar residues. Residues 377–402 (FHCHEEPCQGKILSKKDDIIRHLKWH) form a C2H2-type 1; atypical zinc finger. 3 consecutive C2H2-type zinc fingers follow at residues 439-463 (YHCV…ANFH), 498-522 (YHCC…KTYH), and 556-580 (IHCV…KRKH). Residues 599 to 682 (EESSLDAMPQ…RLKVEDESSN (84 aa)) form a disordered region. Positions 608–629 (QQQQQQQQQQPTSLSQSQSSSS) are enriched in low complexity. Positions 630–644 (VCGGSNTSTPLSSLS) are enriched in polar residues. Residues 650–662 (ARKRGRPPKKIQL) constitute a DNA-binding region (a.T hook).

Expressed in a specific subset of neuroblasts in the ventral nerve cord and the procephalic region in the embryo. Expressed in many, if not all, late delaminating NBs, and in early NBs, but only after they have undergone several rounds of ganglion mother cell-producing divisions.

It is found in the nucleus. In terms of biological role, transcription factor that specifies expression of key genes in developing central nervous system (CNS). Essential for many, if not all, late developing neuroblastoma (NB) sublineages. Binds to the 5'-[CG]C[CT][CT]AAAAA[AT]-3' DNA sequence, like hb, suggesting that cas and hb act as a late regulators in early and late CNS NB sublineage, respectively. Acts by repressing expression of nub/pdm-1 and pdm2/pdm-2 POU genes, and restrict their pattern of expression in appropriate cells. Required for a full expression of vvl/drifter and acj6/I-POU; it is however unknown whether it directly activates these genes. Controls engrailed (en) expression in the ventral nerve cord. The polypeptide is Transcription factor castor (cas) (Drosophila melanogaster (Fruit fly)).